A 141-amino-acid polypeptide reads, in one-letter code: Large ribosomal subunit protein uL11 (141 aa).

It belongs to the universal ribosomal protein uL11 family. In terms of assembly, part of the ribosomal stalk of the 50S ribosomal subunit. Interacts with L10 and the large rRNA to form the base of the stalk. L10 forms an elongated spine to which L12 dimers bind in a sequential fashion forming a multimeric L10(L12)X complex. In terms of processing, one or more lysine residues are methylated.

Its function is as follows. Forms part of the ribosomal stalk which helps the ribosome interact with GTP-bound translation factors. The sequence is that of Large ribosomal subunit protein uL11 from Streptococcus agalactiae serotype III (strain NEM316).